The chain runs to 408 residues: UDP-N-acetylglucosamine--dolichyl-phosphate N-acetylglucosaminephosphotransferase (408 aa).

At Met-1–Pro-10 the chain is on the lumenal side. Residues Leu-11–Ala-38 traverse the membrane as a helical segment. Topologically, residues Ala-39 to Gln-58 are cytoplasmic. UDP-N-acetyl-alpha-D-glucosamine contacts are provided by residues Gln-44 to Leu-46 and Glu-56. Leu-46 contributes to the tunicamycin A1 binding site. A helical membrane pass occupies residues Gly-59–Phe-78. Topologically, residues Leu-79 to Pro-91 are lumenal. Residues His-92–Leu-118 form a helical membrane-spanning segment. Tunicamycin A1 is bound at residue Asn-119. Over Asn-119–Arg-121 the chain is Cytoplasmic. The helical transmembrane segment at Trp-122–Asn-143 threads the bilayer. Residue Lys-125 participates in dolichyl phosphate binding. Topologically, residues Phe-144 to Gly-166 are lumenal. Asn-146 carries an N-linked (GlcNAc...) asparagine glycan. Residues Ile-167 to Ile-186 form a helical membrane-spanning segment. Val-178–Ile-186 lines the dolichyl phosphate pocket. Tunicamycin A1 is bound at residue Asn-185. Residue Asn-185 coordinates Mg(2+). At Leu-187–Gly-192 the chain is on the cytoplasmic side. Asn-191 lines the UDP-N-acetyl-alpha-D-glucosamine pocket. Residues Leu-193–Leu-213 form a helical membrane-spanning segment. Residues Glu-214–Arg-218 are Lumenal-facing. Residues Asp-219–Asn-242 traverse the membrane as a helical segment. Residues Trp-243 to Val-250 are Cytoplasmic-facing. A helical transmembrane segment spans residues Gly-251 to Gly-269. Tunicamycin A1 is bound at residue Asp-252. Asp-252 contacts Mg(2+). The Lumenal segment spans residues His-270–Phe-271. Residues Ser-272–Leu-293 traverse the membrane as a helical segment. At Leu-294 to His-375 the chain is on the cytoplasmic side. Arg-301–Arg-303 contributes to the UDP-N-acetyl-alpha-D-glucosamine binding site. Position 303 (Arg-303) interacts with tunicamycin A1. A helical transmembrane segment spans residues Glu-376–Gln-400. The Lumenal portion of the chain corresponds to Leu-401–Val-408.

The protein belongs to the glycosyltransferase 4 family. In terms of assembly, homodimer. Mg(2+) serves as cofactor.

Its subcellular location is the endoplasmic reticulum membrane. It carries out the reaction a di-trans,poly-cis-dolichyl phosphate + UDP-N-acetyl-alpha-D-glucosamine = an N-acetyl-alpha-D-glucosaminyl-diphospho-di-trans,poly-cis-dolichol + UMP. Its pathway is protein modification; protein glycosylation. Its activity is regulated as follows. Inhibited by natural nucleoside antibiotic tunicamycin, which acts as a structural analog and competitor of UDP-GlcNAc. Activated by mannosylphosphoryldolichol and phospholipids such as phosphatidylglycerol and phosphatidylcholine. In terms of biological role, UDP-N-acetylglucosamine--dolichyl-phosphate N-acetylglucosaminephosphotransferase that operates in the biosynthetic pathway of dolichol-linked oligosaccharides, the glycan precursors employed in protein asparagine (N)-glycosylation. The assembly of dolichol-linked oligosaccharides begins on the cytosolic side of the endoplasmic reticulum membrane and finishes in its lumen. The sequential addition of sugars to dolichol pyrophosphate produces dolichol-linked oligosaccharides containing fourteen sugars, including two GlcNAcs, nine mannoses and three glucoses. Once assembled, the oligosaccharide is transferred from the lipid to nascent proteins by oligosaccharyltransferases. Catalyzes the initial step of dolichol-linked oligosaccharide biosynthesis, transfering GlcNAc-1-P from cytosolic UDP-GlcNAc onto the carrier lipid dolichyl phosphate (P-dolichol), yielding GlcNAc-P-P-dolichol embedded in the cytoplasmic leaflet of the endoplasmic reticulum membrane. This Homo sapiens (Human) protein is UDP-N-acetylglucosamine--dolichyl-phosphate N-acetylglucosaminephosphotransferase.